The primary structure comprises 351 residues: Calcium homeostasis modulator 1 (351 aa).

The Cytoplasmic segment spans residues 1-20 (MDKFRMMFQFLQSNQESFMN). The interval 9–36 (QFLQSNQESFMNGICGIMALASAQMYSS) is central pore. The chain crosses the membrane as a helical span at residues 21–36 (GICGIMALASAQMYSS). Topologically, residues 37–48 (FEFSCPCMPEYN) are extracellular. Cystine bridges form between Cys-41-Cys-126 and Cys-43-Cys-160. The chain crosses the membrane as a helical span at residues 49 to 71 (YTYGIGLLIIPPIWFFLLGFVLN). The segment at 62 to 69 (WFFLLGFV) is phospholipid-binding. Residues 72-98 (NNVSVLAEEWKRPTGRRTKDPSVLRYM) are Cytoplasmic-facing. The chain crosses the membrane as a helical span at residues 99 to 124 (LCSITQRSLIAPAVWVSVTLMDGKSF). Residue Cys-100 is the site of S-palmitoyl cysteine attachment. The tract at residues 104–116 (QRSLIAPAVWVSV) is phospholipid-binding. The Extracellular portion of the chain corresponds to 125 to 177 (LCAFSINLDIEKFGNASLVIGMTETEKLKFLARIPCKDLFEDNEVRVAATRYI). Residue Asn-139 is glycosylated (N-linked (GlcNAc...) asparagine). Residues 178 to 203 (KCISQACGWMFLLMMTFTAFLIRAIR) traverse the membrane as a helical segment. A phospholipid-binding region spans residues 189–199 (LLMMTFTAFLI). Residues 204 to 351 (PCFTQAAFLK…KEWAVYYSKV (148 aa)) lie on the Cytoplasmic side of the membrane. The S-palmitoyl cysteine moiety is linked to residue Cys-205. Positions 259–281 (HRHQSKDTSDAEEEEKQRSDEDK) are disordered. Over residues 263–281 (SKDTSDAEEEEKQRSDEDK) the composition is skewed to basic and acidic residues.

The protein belongs to the CALHM family. In terms of assembly, oligomerizes to form hexamers and octamers. Does not form gap junctions. Associates with CALHM3 as a pore-forming subunit in a hetero-hexameric channel complex. Post-translationally, N-glycosylated. Palmitoylated.

The protein localises to the cell membrane. Its subcellular location is the endoplasmic reticulum membrane. It localises to the basolateral cell membrane. The enzyme catalyses ATP(in) = ATP(out). The catalysed reaction is Ca(2+)(in) = Ca(2+)(out). It catalyses the reaction Mg(2+)(in) = Mg(2+)(out). It carries out the reaction Na(+)(in) = Na(+)(out). The enzyme catalyses K(+)(in) = K(+)(out). The catalysed reaction is Li(+)(in) = Li(+)(out). It catalyses the reaction Rb(+)(in) = Rb(+)(out). It carries out the reaction Cs(+)(in) = Cs(+)(out). The enzyme catalyses chloride(in) = chloride(out). Its activity is regulated as follows. Activated in response to membrane depolarization and low extracellular Ca(2+) concentration. Inhibited by ruthenium red. In terms of biological role, pore-forming subunit of a voltage-gated ion channel. Has poor ion selectivity and forms a wide pore that mediates permeation of small ions including Ca(2+), Na(+), K(+) and Cl(-), as well as larger ions such as ATP(4-). The chain is Calcium homeostasis modulator 1 from Oryzias latipes (Japanese rice fish).